The chain runs to 133 residues: Male-specific protein scotti (133 aa).

Residues 11-57 (FPSNGLGNNNNDPNQQRGERPRQPHPDLGWILDAPNEPPRNRNPLLY) are disordered. Positions 14–24 (NGLGNNNNDPN) are enriched in low complexity. Residue N83 is glycosylated (N-linked (GlcNAc...) asparagine).

Belongs to the male-specific scotti family.

Its function is as follows. Post-meiotically transcribed gene that has a role in late spermiogenesis; required for actin cone progression during spermatid individualization. The sequence is that of Male-specific protein scotti from Drosophila persimilis (Fruit fly).